We begin with the raw amino-acid sequence, 317 residues long: UDP-3-O-acylglucosamine N-acyltransferase (317 aa).

Catalysis depends on H229, which acts as the Proton acceptor.

This sequence belongs to the transferase hexapeptide repeat family. LpxD subfamily. Homotrimer.

It carries out the reaction a UDP-3-O-[(3R)-3-hydroxyacyl]-alpha-D-glucosamine + a (3R)-hydroxyacyl-[ACP] = a UDP-2-N,3-O-bis[(3R)-3-hydroxyacyl]-alpha-D-glucosamine + holo-[ACP] + H(+). Its pathway is bacterial outer membrane biogenesis; LPS lipid A biosynthesis. Its function is as follows. Catalyzes the N-acylation of UDP-3-O-acylglucosamine using 3-hydroxyacyl-ACP as the acyl donor. Is involved in the biosynthesis of lipid A, a phosphorylated glycolipid that anchors the lipopolysaccharide to the outer membrane of the cell. The sequence is that of UDP-3-O-acylglucosamine N-acyltransferase from Campylobacter concisus (strain 13826).